Here is a 141-residue protein sequence, read N- to C-terminus: Eukaryotic translation initiation factor 1A (141 aa).

Basic residues predominate over residues 1–15; that stretch reads MPKNKGKGGKNRRRG. Residues 1–28 form a disordered region; the sequence is MPKNKGKGGKNRRRGKNENEQKRELQFK. The span at 16–28 shows a compositional bias: basic and acidic residues; it reads KNENEQKRELQFK. An S1-like domain is found at 21–95; sequence QKRELQFKEE…DKADVILRYN (75 aa).

Belongs to the eIF-1A family.

Its function is as follows. Seems to be required for maximal rate of protein biosynthesis. Enhances ribosome dissociation into subunits and stabilizes the binding of the initiator Met-tRNA(I) to 40 S ribosomal subunits. The sequence is that of Eukaryotic translation initiation factor 1A (eif1a) from Dictyostelium discoideum (Social amoeba).